We begin with the raw amino-acid sequence, 193 residues long: Peptidyl-tRNA hydrolase (193 aa).

Y17 contacts tRNA. The Proton acceptor role is filled by H22. TRNA-binding residues include Y68, N70, and N116.

This sequence belongs to the PTH family. Monomer.

The protein localises to the cytoplasm. It catalyses the reaction an N-acyl-L-alpha-aminoacyl-tRNA + H2O = an N-acyl-L-amino acid + a tRNA + H(+). Functionally, hydrolyzes ribosome-free peptidyl-tRNAs (with 1 or more amino acids incorporated), which drop off the ribosome during protein synthesis, or as a result of ribosome stalling. Its function is as follows. Catalyzes the release of premature peptidyl moieties from peptidyl-tRNA molecules trapped in stalled 50S ribosomal subunits, and thus maintains levels of free tRNAs and 50S ribosomes. The polypeptide is Peptidyl-tRNA hydrolase (Acinetobacter baumannii (strain AB307-0294)).